We begin with the raw amino-acid sequence, 548 residues long: Fumarate hydratase class I, anaerobic (548 aa).

Cys105 is a [4Fe-4S] cluster binding site. Position 192 is an N6-acetyllysine (Lys192). Residues Cys224 and Cys318 each contribute to the [4Fe-4S] cluster site.

The protein belongs to the class-I fumarase family. As to quaternary structure, homodimer. [4Fe-4S] cluster is required as a cofactor.

It carries out the reaction (S)-malate = fumarate + H2O. The catalysed reaction is (S,S)-tartrate = oxaloacetate + H2O. Functionally, catalyzes the reversible hydration of fumarate to (S)-malate. Functions in the generation of fumarate for use as an anaerobic electron acceptor. To a lesser extent, also displays D-tartrate dehydratase activity, but is not able to convert (R)-malate, L-tartrate or meso-tartrate. Is required for anaerobic growth on D-tartrate. This Escherichia coli (strain K12) protein is Fumarate hydratase class I, anaerobic.